The chain runs to 892 residues: Putative disease resistance protein At4g10780 (892 aa).

Positions 24–63 (SLGNYIHKLKDNIVALEKAIEDLTATRDDVLRRVQMEEGK) form a coiled coil. The region spanning 137–440 (IVAAPAPKLE…ICEGFIDGNI (304 aa)) is the NB-ARC domain. 180-187 (GMGGVGKT) is an ATP binding site. 6 LRR repeats span residues 515-536 (AVRR…PECP), 537-559 (ELTT…FFRH), 562-584 (KLVV…ISEL), 586-608 (ALRY…QDLK), 609-631 (TLIH…SKLS), and 632-654 (SLRT…KELH).

Belongs to the disease resistance NB-LRR family.

Its function is as follows. Potential disease resistance protein. The polypeptide is Putative disease resistance protein At4g10780 (Arabidopsis thaliana (Mouse-ear cress)).